The sequence spans 460 residues: Serine--tRNA ligase (460 aa).

Residues 43-66 show a composition bias toward basic and acidic residues; it reads AEGDGLRQERNEVSSKIGELKQDG. The tract at residues 43 to 81 is disordered; it reads AEGDGLRQERNEVSSKIGELKQDGKDEEAQEAIDRSQEL. L-serine is bound at residue 242–244; the sequence is TAE. Residues 273–275 and Val-289 contribute to the ATP site; that span reads RRE. Glu-296 lines the L-serine pocket. Position 369–372 (369–372) interacts with ATP; sequence EVSS. Ser-405 is an L-serine binding site.

This sequence belongs to the class-II aminoacyl-tRNA synthetase family. Type-1 seryl-tRNA synthetase subfamily. Homodimer. The tRNA molecule binds across the dimer.

Its subcellular location is the cytoplasm. It carries out the reaction tRNA(Ser) + L-serine + ATP = L-seryl-tRNA(Ser) + AMP + diphosphate + H(+). The catalysed reaction is tRNA(Sec) + L-serine + ATP = L-seryl-tRNA(Sec) + AMP + diphosphate + H(+). It participates in aminoacyl-tRNA biosynthesis; selenocysteinyl-tRNA(Sec) biosynthesis; L-seryl-tRNA(Sec) from L-serine and tRNA(Sec): step 1/1. In terms of biological role, catalyzes the attachment of serine to tRNA(Ser). Is also probably able to aminoacylate tRNA(Sec) with serine, to form the misacylated tRNA L-seryl-tRNA(Sec), which will be further converted into selenocysteinyl-tRNA(Sec). The sequence is that of Serine--tRNA ligase (serS) from Haloarcula marismortui (strain ATCC 43049 / DSM 3752 / JCM 8966 / VKM B-1809) (Halobacterium marismortui).